A 272-amino-acid polypeptide reads, in one-letter code: 3-methyl-2-oxobutanoate hydroxymethyltransferase (272 aa).

Residues D51 and D90 each contribute to the Mg(2+) site. 3-methyl-2-oxobutanoate contacts are provided by residues 51 to 52 (DS), D90, and K119. Mg(2+) is bound at residue E121. E188 serves as the catalytic Proton acceptor.

The protein belongs to the PanB family. Homodecamer; pentamer of dimers. Mg(2+) serves as cofactor.

The protein resides in the cytoplasm. The enzyme catalyses 3-methyl-2-oxobutanoate + (6R)-5,10-methylene-5,6,7,8-tetrahydrofolate + H2O = 2-dehydropantoate + (6S)-5,6,7,8-tetrahydrofolate. It participates in cofactor biosynthesis; (R)-pantothenate biosynthesis; (R)-pantoate from 3-methyl-2-oxobutanoate: step 1/2. Functionally, catalyzes the reversible reaction in which hydroxymethyl group from 5,10-methylenetetrahydrofolate is transferred onto alpha-ketoisovalerate to form ketopantoate. The polypeptide is 3-methyl-2-oxobutanoate hydroxymethyltransferase (Dechloromonas aromatica (strain RCB)).